Reading from the N-terminus, the 146-residue chain is Hemoglobin subunit beta (146 aa).

At Val1 the chain carries N-acetylvaline. Positions 2-146 constitute a Globin domain; that stretch reads HLTGEEKSAV…VATALAHKYH (145 aa). Thr12 is subject to Phosphothreonine. Ser44 carries the post-translational modification Phosphoserine. His63 is a binding site for heme b. Lys82 is modified (N6-acetyllysine). His92 serves as a coordination point for heme b. The residue at position 93 (Cys93) is an S-nitrosocysteine. Lys144 carries the N6-acetyllysine modification.

This sequence belongs to the globin family. As to quaternary structure, heterotetramer of two alpha chains and two beta chains. Red blood cells.

In terms of biological role, involved in oxygen transport from the lung to the various peripheral tissues. This Tursiops truncatus (Atlantic bottle-nosed dolphin) protein is Hemoglobin subunit beta (HBB).